A 208-amino-acid polypeptide reads, in one-letter code: Small ribosomal subunit protein uS4 (208 aa).

In terms of domain architecture, S4 RNA-binding spans 98 to 161 (RRLDNVVYRL…KASPRIKELV (64 aa)).

The protein belongs to the universal ribosomal protein uS4 family. In terms of assembly, part of the 30S ribosomal subunit. Contacts protein S5. The interaction surface between S4 and S5 is involved in control of translational fidelity.

One of the primary rRNA binding proteins, it binds directly to 16S rRNA where it nucleates assembly of the body of the 30S subunit. In terms of biological role, with S5 and S12 plays an important role in translational accuracy. The sequence is that of Small ribosomal subunit protein uS4 from Desulforamulus reducens (strain ATCC BAA-1160 / DSM 100696 / MI-1) (Desulfotomaculum reducens).